The chain runs to 332 residues: Tyrosine--tRNA ligase (332 aa).

L-tyrosine contacts are provided by Tyr32, Tyr156, Gln160, Asp163, and Gln178. The 'KMSKS' region signature appears at 219 to 223 (KMSKS). Lys222 provides a ligand contact to ATP.

This sequence belongs to the class-I aminoacyl-tRNA synthetase family. TyrS type 4 subfamily. In terms of assembly, homodimer.

The protein resides in the cytoplasm. It catalyses the reaction tRNA(Tyr) + L-tyrosine + ATP = L-tyrosyl-tRNA(Tyr) + AMP + diphosphate + H(+). Catalyzes the attachment of tyrosine to tRNA(Tyr) in a two-step reaction: tyrosine is first activated by ATP to form Tyr-AMP and then transferred to the acceptor end of tRNA(Tyr). In Thermoplasma acidophilum (strain ATCC 25905 / DSM 1728 / JCM 9062 / NBRC 15155 / AMRC-C165), this protein is Tyrosine--tRNA ligase.